We begin with the raw amino-acid sequence, 2297 residues long: Xin actin-binding repeat-containing protein 1 (2297 aa).

Residues Met-1–Thr-11 are compositionally biased toward basic and acidic residues. A disordered region spans residues Met-1 to Pro-28. Xin repeat units lie at residues Gly-104–Asp-119, Gly-139–Asp-154, Gly-169–Asp-184, Gly-208–Asp-223, Gly-248–Cys-263, Ser-286–Asp-301, Gly-323–Asp-338, Ala-362–Ser-377, and Gly-396–Asp-411. Over residues Gly-433–Phe-442 the composition is skewed to basic and acidic residues. The segment at Gly-433–Asp-461 is disordered. Xin repeat units lie at residues Gly-464–Asn-479, Gly-494–Tyr-509, Gly-532–Asp-547, Asp-570–Asp-585, Ser-605–Asp-620, Ala-638–Asp-653, Val-677–Asp-692, Gly-715–Gly-730, Gly-747–Gly-762, Gly-779–Asp-794, Val-818–Tyr-833, Gly-856–Asp-871, Gly-893–Asp-908, and Lys-928–Ser-943. Residue Ser-952 is modified to Phosphoserine. 3 Xin repeats span residues Gly-959 to Asp-974, Gly-997 to Asp-1012, and Ala-1033 to Asp-1048. 4 disordered regions span residues Pro-1617–Lys-1680, Lys-1866–Ile-1900, Ser-2147–Lys-2191, and Glu-2243–His-2297. Composition is skewed to low complexity over residues Ser-1618 to Thr-1630 and Ser-1644 to Ser-1656. Basic and acidic residues-rich tracts occupy residues Ser-1876–Ser-1885 and Lys-2151–Thr-2162. Over residues Gln-2166–Ser-2180 the composition is skewed to low complexity. A compositionally biased stretch (polar residues) spans Gly-2259–Ser-2278.

This sequence belongs to the Xin family. As to expression, expressed at intercalated disks in the heart (at protein level).

Its subcellular location is the cell junction. The protein resides in the adherens junction. The protein localises to the desmosome. Functionally, positively regulates organization of the outer plexiform layer and Muller glia cells in the retina. May protect actin filaments from depolymerization. May play a role in development of normal skeletal muscle morphology and muscle fiber type composition. The chain is Xin actin-binding repeat-containing protein 1 from Danio rerio (Zebrafish).